A 121-amino-acid chain; its full sequence is Large ribosomal subunit protein bL20 (121 aa).

The protein belongs to the bacterial ribosomal protein bL20 family.

Binds directly to 23S ribosomal RNA and is necessary for the in vitro assembly process of the 50S ribosomal subunit. It is not involved in the protein synthesizing functions of that subunit. The protein is Large ribosomal subunit protein bL20 of Chlamydia caviae (strain ATCC VR-813 / DSM 19441 / 03DC25 / GPIC) (Chlamydophila caviae).